We begin with the raw amino-acid sequence, 253 residues long: Vitamin B12 import ATP-binding protein BtuD (253 aa).

An ABC transporter domain is found at 4–236 (LQLSNVSVDT…NILSEVFEVD (233 aa)). 32 to 39 (GPNGAGKS) contacts ATP.

It belongs to the ABC transporter superfamily. Vitamin B12 importer (TC 3.A.1.13.1) family. As to quaternary structure, the complex is composed of two ATP-binding proteins (BtuD), two transmembrane proteins (BtuC) and a solute-binding protein (BtuF).

The protein localises to the cell inner membrane. It catalyses the reaction an R-cob(III)alamin(out) + ATP + H2O = an R-cob(III)alamin(in) + ADP + phosphate + H(+). In terms of biological role, part of the ABC transporter complex BtuCDF involved in vitamin B12 import. Responsible for energy coupling to the transport system. This Yersinia enterocolitica serotype O:8 / biotype 1B (strain NCTC 13174 / 8081) protein is Vitamin B12 import ATP-binding protein BtuD.